The following is a 399-amino-acid chain: Glutathione-independent formaldehyde dehydrogenase (399 aa).

Position 47 (Cys47) interacts with Zn(2+). The NAD(+) site is built by Gly48, Ser49, and His52. 6 residues coordinate Zn(2+): His68, Cys98, Cys101, Cys104, Cys112, and Asp170. NAD(+) contacts are provided by Val198, Asp218, Arg223, Val263, Arg268, Pro300, Gln338, and Thr339.

It belongs to the zinc-containing alcohol dehydrogenase family. Homotetramer. It depends on Zn(2+) as a cofactor.

It carries out the reaction formaldehyde + NAD(+) + H2O = formate + NADH + 2 H(+). The catalysed reaction is acetaldehyde + NAD(+) + H2O = acetate + NADH + 2 H(+). Dehydrogenase that catalyzes the NAD(+)-dependent oxidation of formaldehyde and acetaldehyde. Shows no detectable activity against either aldehydes with longer carbon chains or ethanol. The polypeptide is Glutathione-independent formaldehyde dehydrogenase (Pseudomonas aeruginosa (strain LESB58)).